A 787-amino-acid chain; its full sequence is Disease resistance protein ADR1 (787 aa).

One can recognise an RPW8 domain in the interval 1 to 149; the sequence is MASFIDLFAG…LLTERNDSLS (149 aa). Residues 96-112 are a coiled coil; sequence HANKMKDLEKQISRFLN. 193–200 contacts ATP; that stretch reads GMSGSGKT. Positions 247–414 constitute an NB-ARC domain; sequence HQRKLVILDD…PLDLLTSVWV (168 aa). LRR repeat units lie at residues 549 to 575, 576 to 599, 650 to 674, and 722 to 745; these read MSRLRVLVIINNGMSPARLHGFSIFAN, LAKLRSLWLKRVHVPELTSCTIPL, ITSLNSLSITNCPRILELPKNLSNV, and LGSLEKIDMRECSLLGLPSSVAAL.

The protein belongs to the disease resistance NB-LRR family.

Its function is as follows. Disease resistance (R) protein that mediates resistance against Hyaloperonospora parasitica in a salicylic acid-dependent manner. Also mediates resistance against Erysiphe cichoracearum is both salicylic acid-dependent and partially NPR1-dependent. Resistance proteins guard the plant against pathogens that contain an appropriate avirulence protein via an indirect interaction with this avirulence protein. That triggers a defense system including the hypersensitive response, which restricts the pathogen growth. The polypeptide is Disease resistance protein ADR1 (ADR1) (Arabidopsis thaliana (Mouse-ear cress)).